The sequence spans 311 residues: Mycinamicin-resistance protein MyrB (311 aa).

Residues N27, L29, G54, E75, and D98 each contribute to the S-adenosyl-L-methionine site. A disordered region spans residues 272–311 (PAPAGRSVRARPGSVGPDRSLPPRGLRSGPPRARRRGGGA). The segment covering 293–302 (PPRGLRSGPP) has biased composition (low complexity).

The protein belongs to the class I-like SAM-binding methyltransferase superfamily. rRNA adenine N(6)-methyltransferase family.

Functionally, confers resistance to macrolide, lincosamide and streptogramin B antibiotics. The sequence is that of Mycinamicin-resistance protein MyrB (myrB) from Micromonospora griseorubida.